Reading from the N-terminus, the 118-residue chain is Large ribosomal subunit protein bL19 (118 aa).

Belongs to the bacterial ribosomal protein bL19 family.

Functionally, this protein is located at the 30S-50S ribosomal subunit interface and may play a role in the structure and function of the aminoacyl-tRNA binding site. The protein is Large ribosomal subunit protein bL19 of Campylobacter lari (strain RM2100 / D67 / ATCC BAA-1060).